Here is a 561-residue protein sequence, read N- to C-terminus: Potassium-transporting ATPase potassium-binding subunit (561 aa).

A run of 10 helical transmembrane segments spans residues 4–24 (IVMQ…PLGI), 65–85 (AVSV…VLML), 133–153 (IGLT…LFAV), 177–197 (LYIL…QGVV), 253–273 (FTNL…VVMF), 285–305 (AIMT…TISE), 380–400 (GLYG…LLVG), 417–437 (MVCL…AVAV), 484–504 (MVGA…ALYL), and 528–548 (FIGL…LPAL).

Belongs to the KdpA family. As to quaternary structure, the system is composed of three essential subunits: KdpA, KdpB and KdpC.

The protein localises to the cell membrane. Functionally, part of the high-affinity ATP-driven potassium transport (or Kdp) system, which catalyzes the hydrolysis of ATP coupled with the electrogenic transport of potassium into the cytoplasm. This subunit binds the extracellular potassium ions and delivers the ions to the membrane domain of KdpB through an intramembrane tunnel. The protein is Potassium-transporting ATPase potassium-binding subunit of Listeria monocytogenes serovar 1/2a (strain ATCC BAA-679 / EGD-e).